The chain runs to 875 residues: MTDIDVRLREDVHVLGELLGETIRQQHGDAFLQKIEDIRHSAKADRRGPGEQLSSTLADLAEEDLLPVARAFNQFLNLANMAEQYQLIRRRDADQPEPFEAQVLPELLGRLKQAGHSNDALARQLAKLDIQLVLTAHPTEVARRTLIQKYDAIAGQLAAQDHRDLTSAERQQVRERLRRLIAEAWHTEEIRRTRPTPVDEAKWGFAVIEHSLWHAIPSHLRKVDKALLEATGLRLPLEAAPIRFASWMGGDRDGNPNVTAAVTREVLLLARWMAADLFLRDIDALAAELSMQQANDALRKQVGDSAEPYRAVLKQLRDRLRATRAWAHSALTSNQPAGADVLVDNRELIAPLELCYQSLHECGMGVIAEGPLLDCLRRAVTFGLFLGRLDVRQDAARHRDALTEITDYLGLGRYADWDEEQRIAFLQAELKNRRPLLPAHFKPQADTAEVLATCREVAAAPAASLGSYVISMAGAASDVLAVQLLLKEAGLTRPMRVVPLFETLADLDNAGPVMQRLLGLPGYRAGLRGPQEVMIGYSDSAKDAGTTAAAWAQYRAQENLVRICAEHQVELLLFHGRGGTVGRGGGPAHAAILSQPPGSVAGRFRTTEQGEMIRFKFGLPGIAEQNLNLYLAAVLEATLLPPPPPQPAWREVMDQLAADGVQAYRSVVRENPDFVEYFRQSTPEQELGRLPLGSRPAKRRAGGIESLRAIPWIFGWTQTRLMLPAWLGWETALTNALARGQGELLAQMREQWPFFRTRIDMLEMVLAKADAQIAEAYDERLVQPHLRPLGAHLRDLLSQSCQVVLGLTGQPVLLAHSPETLEFISLRNTYLDPLHRLQAELLARSRSREAALDSPLEQALLVTVAGIAAGLRNTG.

Residues H137 and K542 contribute to the active site.

This sequence belongs to the PEPCase type 1 family. Mg(2+) serves as cofactor.

The catalysed reaction is oxaloacetate + phosphate = phosphoenolpyruvate + hydrogencarbonate. Its function is as follows. Forms oxaloacetate, a four-carbon dicarboxylic acid source for the tricarboxylic acid cycle. In Pseudomonas putida (strain ATCC 700007 / DSM 6899 / JCM 31910 / BCRC 17059 / LMG 24140 / F1), this protein is Phosphoenolpyruvate carboxylase.